We begin with the raw amino-acid sequence, 503 residues long: Ribose import ATP-binding protein RbsA 1 (503 aa).

ABC transporter domains are found at residues isoleucine 5–alanine 241 and isoleucine 253–glutamate 495. Glycine 37–serine 44 lines the ATP pocket.

Belongs to the ABC transporter superfamily. Ribose importer (TC 3.A.1.2.1) family. As to quaternary structure, the complex is composed of an ATP-binding protein (RbsA), two transmembrane proteins (RbsC) and a solute-binding protein (RbsB).

It is found in the cell inner membrane. The catalysed reaction is D-ribose(out) + ATP + H2O = D-ribose(in) + ADP + phosphate + H(+). Functionally, part of the ABC transporter complex RbsABC involved in ribose import. Responsible for energy coupling to the transport system. The polypeptide is Ribose import ATP-binding protein RbsA 1 (Rhizobium meliloti (strain 1021) (Ensifer meliloti)).